The sequence spans 175 residues: METWRKGSFRNASFFKQLSLGRPRRLRRQSSVLSQASTAGGDHEEYSNREVIRELQGRPDGRRLPLWGDEQPRATLLAPPKPPRLYRESSSCPNILEPPPAYTAAYSATLPSALSLSSALHQHSEKGLVDTPCFQRTPTPDLSDPFLSFKVDLGISLLEEVLQMLREQFPSEPSF.

A mitochondrion-targeting transit peptide spans 1 to 11 (METWRKGSFRN). Positions 24–92 (RRLRRQSSVL…PRLYRESSSC (69 aa)) are disordered. Over residues 41 to 63 (GDHEEYSNREVIRELQGRPDGRR) the composition is skewed to basic and acidic residues.

The protein localises to the mitochondrion. This is an uncharacterized protein from Homo sapiens (Human).